The following is a 466-amino-acid chain: Argininosuccinate lyase (466 aa).

The protein belongs to the lyase 1 family. Argininosuccinate lyase subfamily.

It localises to the cytoplasm. The catalysed reaction is 2-(N(omega)-L-arginino)succinate = fumarate + L-arginine. It functions in the pathway amino-acid biosynthesis; L-arginine biosynthesis; L-arginine from L-ornithine and carbamoyl phosphate: step 3/3. This is Argininosuccinate lyase from Brucella abortus (strain S19).